The following is a 431-amino-acid chain: Glutamyl-tRNA(Gln) amidotransferase subunit A (431 aa).

Residues lysine 37 and serine 112 each act as charge relay system in the active site. The active-site Acyl-ester intermediate is the serine 136.

This sequence belongs to the amidase family. GatA subfamily. Heterotrimer of A, B and C subunits.

The catalysed reaction is L-glutamyl-tRNA(Gln) + L-glutamine + ATP + H2O = L-glutaminyl-tRNA(Gln) + L-glutamate + ADP + phosphate + H(+). Functionally, allows the formation of correctly charged Gln-tRNA(Gln) through the transamidation of misacylated Glu-tRNA(Gln) in organisms which lack glutaminyl-tRNA synthetase. The reaction takes place in the presence of glutamine and ATP through an activated gamma-phospho-Glu-tRNA(Gln). This is Glutamyl-tRNA(Gln) amidotransferase subunit A from Methanospirillum hungatei JF-1 (strain ATCC 27890 / DSM 864 / NBRC 100397 / JF-1).